The chain runs to 448 residues: Phosphoglucosamine mutase (448 aa).

Catalysis depends on serine 102, which acts as the Phosphoserine intermediate. Residues serine 102, aspartate 242, aspartate 244, and aspartate 246 each coordinate Mg(2+). Residue serine 102 is modified to Phosphoserine.

Belongs to the phosphohexose mutase family. It depends on Mg(2+) as a cofactor. Post-translationally, activated by phosphorylation.

The enzyme catalyses alpha-D-glucosamine 1-phosphate = D-glucosamine 6-phosphate. Its function is as follows. Catalyzes the conversion of glucosamine-6-phosphate to glucosamine-1-phosphate. The polypeptide is Phosphoglucosamine mutase (Brevibacillus brevis (strain 47 / JCM 6285 / NBRC 100599)).